The chain runs to 355 residues: 3-dehydroquinate synthase (355 aa).

Residues 67 to 72 (DGEIYK), 101 to 105 (GVIGD), 125 to 126 (TT), lysine 138, lysine 147, and 165 to 168 (FLNT) contribute to the NAD(+) site. Residues glutamate 180, histidine 243, and histidine 260 each contribute to the Zn(2+) site.

It belongs to the sugar phosphate cyclases superfamily. Dehydroquinate synthase family. NAD(+) serves as cofactor. Requires Co(2+) as cofactor. Zn(2+) is required as a cofactor.

The protein resides in the cytoplasm. It catalyses the reaction 7-phospho-2-dehydro-3-deoxy-D-arabino-heptonate = 3-dehydroquinate + phosphate. It participates in metabolic intermediate biosynthesis; chorismate biosynthesis; chorismate from D-erythrose 4-phosphate and phosphoenolpyruvate: step 2/7. In terms of biological role, catalyzes the conversion of 3-deoxy-D-arabino-heptulosonate 7-phosphate (DAHP) to dehydroquinate (DHQ). This chain is 3-dehydroquinate synthase, found in Buchnera aphidicola subsp. Baizongia pistaciae (strain Bp).